A 162-amino-acid polypeptide reads, in one-letter code: UPF0178 protein RHOS4_24670 (162 aa).

The protein belongs to the UPF0178 family.

This Cereibacter sphaeroides (strain ATCC 17023 / DSM 158 / JCM 6121 / CCUG 31486 / LMG 2827 / NBRC 12203 / NCIMB 8253 / ATH 2.4.1.) (Rhodobacter sphaeroides) protein is UPF0178 protein RHOS4_24670.